The chain runs to 226 residues: Ribonuclease 3 (226 aa).

Residues 6–128 (INRLQRKLGY…LIGAIFLDSD (123 aa)) enclose the RNase III domain. Residue Glu-41 coordinates Mg(2+). The active site involves Asp-45. Mg(2+) contacts are provided by Asp-114 and Glu-117. Residue Glu-117 is part of the active site. The DRBM domain occupies 155–225 (DPKTRLQEYL…AEQALKQLEL (71 aa)).

This sequence belongs to the ribonuclease III family. Homodimer. It depends on Mg(2+) as a cofactor.

It is found in the cytoplasm. It carries out the reaction Endonucleolytic cleavage to 5'-phosphomonoester.. Digests double-stranded RNA. Involved in the processing of primary rRNA transcript to yield the immediate precursors to the large and small rRNAs (23S and 16S). Processes some mRNAs, and tRNAs when they are encoded in the rRNA operon. Processes pre-crRNA and tracrRNA of type II CRISPR loci if present in the organism. The polypeptide is Ribonuclease 3 (Photorhabdus laumondii subsp. laumondii (strain DSM 15139 / CIP 105565 / TT01) (Photorhabdus luminescens subsp. laumondii)).